The chain runs to 730 residues: Denticleless protein homolog (730 aa).

At methionine 1 the chain carries N-acetylmethionine. 3 WD repeats span residues 47-89, 96-135, and 138-178; these read GVPV…FRKK, AHWN…LIGT, and GHQC…KDGF. A DDB1-binding motif motif is present at residues 168 to 171; it reads WDTR. A compositionally biased stretch (polar residues) spans 188–198; it reads AHNTSDKQTPS. Residues 188 to 210 are disordered; the sequence is AHNTSDKQTPSKPKKKQNSKGLA. Threonine 196 carries the post-translational modification Phosphothreonine. Residues 197 to 203 carry the Nuclear localization signal motif; the sequence is PSKPKKK. WD repeat units follow at residues 214-253, 267-308, 313-354, and 358-398; these read DFQQ…TAYR, SSTR…TSPV, GHQN…QPPT, and GHSQ…EEKP. The DDB1-binding motif motif lies at 243–246; sequence WDLR. The segment at 399 to 443 is disordered; sequence GGDKLSTVGWASQKKKESRPGLVTVTSSQSTPAKAPRAKCNPSNS. A phosphoserine mark is found at serine 410 and serine 426. A Phosphothreonine; by CDK1 and CDK2 modification is found at threonine 464. Residues 465–498 form a disordered region; the sequence is PTFSIKTSPAKARSPINRRGSVSSVSPKPPSSFK. A phosphoserine mark is found at serine 485, serine 490, serine 495, and serine 512. A Phosphothreonine modification is found at threonine 516. Serine 557 is modified (phosphoserine). 2 disordered regions span residues 599-631 and 644-703; these read SKDS…YASE and GEGS…TITP. Phosphoserine occurs at positions 676 and 679. Polar residues predominate over residues 679–689; the sequence is SPSSQTPNSRR. Phosphothreonine is present on residues threonine 684 and threonine 702. Position 717 is a phosphoserine (serine 717).

This sequence belongs to the WD repeat cdt2 family. In terms of assembly, component of the DCX(DTL) E3 ubiquitin ligase complex (also called CRL4(CDT2)), at least composed of CUL4 (CUL4A or CUL4B), DDB1, DTL/CDT2 and RBX1. Interacts with CDKN1A. Interacts with DDB1. Interacts with FBXO11; SCF(FBXWO11) controls DTL stability but DCX(DTL) does not control FBXO11 stability. Interacts with CRY1. Post-translationally, ubiquitinated by the anaphase promoting complex/cyclosome (APC/C). Autoubiquitinated through 'Lys-48'-polyubiquitin chains in a PCNA-independent reaction, allowing proteasomal turnover. Polyubiquitinated by SCF(FBXO11) when not phosphorylated, leading to its degradation. A tight regulation of the polyubiquitination by SCF(FBXO11) is involved in the control of different processes such as TGF-beta signaling, cell cycle progression and exit. In terms of processing, phosphorylated at Thr-464 by CDK1/Cyclin-B and CDK2/Cyclin-A but not by CDK2/Cyclin-E, MAPK1 or PLK1. Phosphorylation at Thr-464 inhibits the interaction with FBXO11 and decreases upon cell cycle exit induced by TGF-beta or serum starvation. As to expression, expressed in placenta and testis, very low expression seen in skeletal muscle. Detected in all hematopoietic tissues examined, with highest expression in thymus and bone marrow. A low level detected in the spleen and lymph node, and barely detectable level in the peripheral leukocytes. RA treatment down-regulated the expression in NT2 cell.

It is found in the nucleus. The protein localises to the nucleus membrane. It localises to the cytoplasm. The protein resides in the cytoskeleton. Its subcellular location is the microtubule organizing center. It is found in the centrosome. The protein localises to the chromosome. It functions in the pathway protein modification; protein ubiquitination. Its function is as follows. Substrate-specific adapter of a DCX (DDB1-CUL4-X-box) E3 ubiquitin-protein ligase complex required for cell cycle control, DNA damage response and translesion DNA synthesis. The DCX(DTL) complex, also named CRL4(CDT2) complex, mediates the polyubiquitination and subsequent degradation of CDT1, CDKN1A/p21(CIP1), FBH1, KMT5A and SDE2. CDT1 degradation in response to DNA damage is necessary to ensure proper cell cycle regulation of DNA replication. CDKN1A/p21(CIP1) degradation during S phase or following UV irradiation is essential to control replication licensing. KMT5A degradation is also important for a proper regulation of mechanisms such as TGF-beta signaling, cell cycle progression, DNA repair and cell migration. Most substrates require their interaction with PCNA for their polyubiquitination: substrates interact with PCNA via their PIP-box, and those containing the 'K+4' motif in the PIP box, recruit the DCX(DTL) complex, leading to their degradation. In undamaged proliferating cells, the DCX(DTL) complex also promotes the 'Lys-164' monoubiquitination of PCNA, thereby being involved in PCNA-dependent translesion DNA synthesis. The DDB1-CUL4A-DTL E3 ligase complex regulates the circadian clock function by mediating the ubiquitination and degradation of CRY1. The polypeptide is Denticleless protein homolog (DTL) (Homo sapiens (Human)).